The following is a 128-amino-acid chain: Large ribosomal subunit protein bL12 (128 aa).

It belongs to the bacterial ribosomal protein bL12 family. Homodimer. Part of the ribosomal stalk of the 50S ribosomal subunit. Forms a multimeric L10(L12)X complex, where L10 forms an elongated spine to which 2 to 4 L12 dimers bind in a sequential fashion. Binds GTP-bound translation factors.

In terms of biological role, forms part of the ribosomal stalk which helps the ribosome interact with GTP-bound translation factors. Is thus essential for accurate translation. The polypeptide is Large ribosomal subunit protein bL12 (Thermotoga petrophila (strain ATCC BAA-488 / DSM 13995 / JCM 10881 / RKU-1)).